We begin with the raw amino-acid sequence, 72 residues long: Translation initiation factor IF-1 (72 aa).

One can recognise an S1-like domain in the interval 1-72 (MAKDDVIEIE…TKGRITYRFK (72 aa)).

Belongs to the IF-1 family. Component of the 30S ribosomal translation pre-initiation complex which assembles on the 30S ribosome in the order IF-2 and IF-3, IF-1 and N-formylmethionyl-tRNA(fMet); mRNA recruitment can occur at any time during PIC assembly.

The protein resides in the cytoplasm. In terms of biological role, one of the essential components for the initiation of protein synthesis. Stabilizes the binding of IF-2 and IF-3 on the 30S subunit to which N-formylmethionyl-tRNA(fMet) subsequently binds. Helps modulate mRNA selection, yielding the 30S pre-initiation complex (PIC). Upon addition of the 50S ribosomal subunit IF-1, IF-2 and IF-3 are released leaving the mature 70S translation initiation complex. This is Translation initiation factor IF-1 from Ligilactobacillus salivarius (strain UCC118) (Lactobacillus salivarius).